Here is a 584-residue protein sequence, read N- to C-terminus: Kinesin-like protein KIN-10C (584 aa).

The Kinesin motor domain occupies 11 to 324 (PVRVVLRVRP…VSLAARSRHV (314 aa)). Position 99-106 (99-106 (GATGSGKT)) interacts with ATP. Disordered regions lie at residues 377-398 (SMSHKKQSASGRVSGRGKAMDQ) and 445-469 (DKTGSSLRKALSPISSNMDPQKQRT).

It belongs to the TRAFAC class myosin-kinesin ATPase superfamily. Kinesin family. KIN-10 subfamily.

The polypeptide is Kinesin-like protein KIN-10C (Oryza sativa subsp. japonica (Rice)).